Here is a 549-residue protein sequence, read N- to C-terminus: Small ribosomal subunit protein bS1 (549 aa).

S1 motif domains lie at 21–87 (GSIV…LSRE), 105–171 (KATV…VSRR), 192–260 (GSEV…LGLK), 277–347 (NSKL…LGLK), 364–434 (GDKV…LGIK), and 451–512 (GAVV…LSVK).

The protein belongs to the bacterial ribosomal protein bS1 family.

Functionally, binds mRNA; thus facilitating recognition of the initiation point. It is needed to translate mRNA with a short Shine-Dalgarno (SD) purine-rich sequence. The sequence is that of Small ribosomal subunit protein bS1 (rpsA) from Haemophilus influenzae (strain ATCC 51907 / DSM 11121 / KW20 / Rd).